We begin with the raw amino-acid sequence, 564 residues long: Dihydropyrimidinase-related protein 5 (564 aa).

2 positions are modified to phosphothreonine: threonine 509 and threonine 514. A phosphoserine mark is found at serine 532 and serine 538. Arginine 559 is modified (omega-N-methylarginine).

The protein belongs to the metallo-dependent hydrolases superfamily. Hydantoinase/dihydropyrimidinase family. In terms of assembly, homotetramer, and heterotetramer with other DPYS-like proteins. Interacts with DPYSL2, DPYSL3 and DPYSL4. Interacts with MAP2 and TUBB3.

The protein localises to the cytoplasm. Functionally, involved in the negative regulation of dendrite outgrowth. This is Dihydropyrimidinase-related protein 5 (DPYSL5) from Homo sapiens (Human).